The chain runs to 632 residues: Epsin-3 (632 aa).

6 residues coordinate a 1,2-diacyl-sn-glycero-3-phospho-(1D-myo-inositol-4,5-bisphosphate): R8, K11, R25, N30, R63, and H73. In terms of domain architecture, ENTH spans 12–144; that stretch reads NIVHNYSEAE…KDEERLRQER (133 aa). The segment at 172-214 is disordered; it reads YGEDYSRSRGSPSSYNSSSSSPRYTSDLEQARPQTSGEEELQL. Residues 179-196 show a composition bias toward low complexity; that stretch reads SRGSPSSYNSSSSSPRYT. Phosphoserine is present on residues S191 and S192. 2 UIM domains span residues 209–228 and 236–255; these read EEEL…AEKP and DEDL…HEKE. The interval 257-296 is disordered; sequence RSWQGDGSPMANGAGAVVHHQRDREPEREERKEEEKLKTS. S264 is subject to Phosphoserine. The span at 276–294 shows a compositional bias: basic and acidic residues; sequence HQRDREPEREERKEEEKLK. A run of 8 repeats spans residues 321 to 323, 344 to 346, 371 to 373, 387 to 389, 404 to 406, 524 to 526, 537 to 539, and 629 to 631. The 5 X 3 AA repeats of [DE]-P-W stretch occupies residues 321 to 406; sequence DPWDIPGFRP…KLPSTGADPW (86 aa). Disordered stretches follow at residues 326-501, 525-560, and 604-632; these read PGFR…SFLG, PFLT…PALG, and AFAP…NPFL. Residues 353–371 show a composition bias toward polar residues; sequence TVLSRSQPWDLTPMLSSSE. Residues 524 to 631 are 3 X 3 AA repeats of N-P-F; that stretch reads NPFLTGLSAP…PPPQTGTNPF (108 aa).

Belongs to the epsin family. In terms of tissue distribution, detected in migrating keratinocytes from wounded skin, but not in differentiating keratinocytes or in normal skin. Detected in chronic wounds, basal cell carcinoma and ulcerative colitis.

It localises to the cytoplasm. It is found in the perinuclear region. The protein resides in the cytoplasmic vesicle. Its subcellular location is the clathrin-coated vesicle. The protein localises to the nucleus. The chain is Epsin-3 (EPN3) from Homo sapiens (Human).